Here is a 416-residue protein sequence, read N- to C-terminus: tRNA(Met) cytidine acetate ligase (416 aa).

Residues 7 to 20 (VVEY…HLHH), Gly101, Asn162, and 187 to 188 (RI) contribute to the ATP site.

It belongs to the TmcAL family.

The protein localises to the cytoplasm. The enzyme catalyses cytidine(34) in elongator tRNA(Met) + acetate + ATP = N(4)-acetylcytidine(34) in elongator tRNA(Met) + AMP + diphosphate. Its function is as follows. Catalyzes the formation of N(4)-acetylcytidine (ac(4)C) at the wobble position of elongator tRNA(Met), using acetate and ATP as substrates. First activates an acetate ion to form acetyladenylate (Ac-AMP) and then transfers the acetyl group to tRNA to form ac(4)C34. In Halalkalibacterium halodurans (strain ATCC BAA-125 / DSM 18197 / FERM 7344 / JCM 9153 / C-125) (Bacillus halodurans), this protein is tRNA(Met) cytidine acetate ligase.